A 184-amino-acid polypeptide reads, in one-letter code: ATP-dependent protease subunit HslV (184 aa).

The active site involves threonine 8. Positions 165, 168, and 171 each coordinate Na(+).

The protein belongs to the peptidase T1B family. HslV subfamily. As to quaternary structure, a double ring-shaped homohexamer of HslV is capped on each side by a ring-shaped HslU homohexamer. The assembly of the HslU/HslV complex is dependent on binding of ATP.

Its subcellular location is the cytoplasm. It carries out the reaction ATP-dependent cleavage of peptide bonds with broad specificity.. Allosterically activated by HslU binding. In terms of biological role, protease subunit of a proteasome-like degradation complex believed to be a general protein degrading machinery. This chain is ATP-dependent protease subunit HslV, found in Pediococcus pentosaceus (strain ATCC 25745 / CCUG 21536 / LMG 10740 / 183-1w).